Consider the following 764-residue polypeptide: Polyribonucleotide nucleotidyltransferase (764 aa).

Residues aspartate 541 and aspartate 547 each coordinate Mg(2+). In terms of domain architecture, KH spans proline 607 to isoleucine 666. Residues glycine 678 to valine 747 enclose the S1 motif domain.

It belongs to the polyribonucleotide nucleotidyltransferase family. It depends on Mg(2+) as a cofactor.

The protein localises to the cytoplasm. It carries out the reaction RNA(n+1) + phosphate = RNA(n) + a ribonucleoside 5'-diphosphate. Functionally, involved in mRNA degradation. Catalyzes the phosphorolysis of single-stranded polyribonucleotides processively in the 3'- to 5'-direction. This Nocardia farcinica (strain IFM 10152) protein is Polyribonucleotide nucleotidyltransferase.